Consider the following 408-residue polypeptide: Centromere protein U (408 aa).

The segment covering aspartate 1–arginine 33 has biased composition (basic residues). The tract at residues aspartate 1–threonine 218 is disordered. Threonine 72 carries the post-translational modification Phosphothreonine; by PLK1. The residue at position 92 (threonine 92) is a Phosphothreonine. Positions glutamine 94–aspartate 103 are enriched in basic and acidic residues. At serine 102 the chain carries Phosphoserine. Threonine 104 is subject to Phosphothreonine. 3 positions are modified to phosphoserine: serine 105, serine 110, and serine 114. Basic residues predominate over residues serine 118–lysine 127. A phosphoserine mark is found at serine 130, serine 133, and serine 135. Residues proline 176–serine 186 are compositionally biased toward polar residues. Residue lysine 178 forms a Glycyl lysine isopeptide (Lys-Gly) (interchain with G-Cter in SUMO2) linkage. A phosphoserine mark is found at serine 183 and serine 187. The residue at position 192 (threonine 192) is a Phosphothreonine. Serine 222 carries the phosphoserine modification. Residues serine 273–asparagine 350 are a coiled coil. A Nuclear localization signal motif is present at residues lysine 293–leucine 310.

It belongs to the CENP-U/AME1 family. Component of the CENPA-NAC complex, at least composed of CENPA, CENPC, CENPH, CENPM, CENPN, CENPT and CENPU. The CENPA-NAC complex interacts with the CENPA-CAD complex, composed of CENPI, CENPK, CENPL, CENPO, CENPP, CENPQ, CENPR and CENPS. Interacts with MLF1. Phosphorylated by PLK1 at Thr-72, creating a self-tethering site that specifically interacts with the polo-box domain of PLK1.

Its subcellular location is the cytoplasm. It is found in the nucleus. The protein localises to the chromosome. It localises to the centromere. The protein resides in the kinetochore. Functionally, component of the CENPA-NAC (nucleosome-associated) complex, a complex that plays a central role in assembly of kinetochore proteins, mitotic progression and chromosome segregation. The CENPA-NAC complex recruits the CENPA-CAD (nucleosome distal) complex and may be involved in incorporation of newly synthesized CENPA into centromeres. Plays an important role in the correct PLK1 localization to the mitotic kinetochores. A scaffold protein responsible for the initial recruitment and maintenance of the kinetochore PLK1 population until its degradation. Involved in transcriptional repression. This chain is Centromere protein U (CENPU), found in Bos taurus (Bovine).